Consider the following 528-residue polypeptide: Cytochrome P450 1A5 (528 aa).

Residue Cys-467 participates in heme binding.

Belongs to the cytochrome P450 family. Heme serves as cofactor.

It localises to the endoplasmic reticulum membrane. The protein resides in the microsome membrane. It carries out the reaction an organic molecule + reduced [NADPH--hemoprotein reductase] + O2 = an alcohol + oxidized [NADPH--hemoprotein reductase] + H2O + H(+). In terms of biological role, cytochromes P450 are a group of heme-thiolate monooxygenases. In liver microsomes, this enzyme is involved in an NADPH-dependent electron transport pathway. It oxidizes a variety of structurally unrelated compounds, including steroids, fatty acids, and xenobiotics. This Gallus gallus (Chicken) protein is Cytochrome P450 1A5 (CYP1A5).